A 165-amino-acid chain; its full sequence is Small ribosomal subunit protein bS16 (165 aa).

The segment at 110-165 (LSEANNGPTAEAITEKKKKAREDKEAKEAAEKAAAEKAAAAESEEAPAEEAAAEEA) is disordered. Residues 129–144 (AREDKEAKEAAEKAAA) are compositionally biased toward basic and acidic residues. Residues 151–165 (ESEEAPAEEAAAEEA) are compositionally biased toward acidic residues.

It belongs to the bacterial ribosomal protein bS16 family.

The protein is Small ribosomal subunit protein bS16 of Corynebacterium glutamicum (strain R).